Reading from the N-terminus, the 220-residue chain is ATP phosphoribosyltransferase (220 aa).

Belongs to the ATP phosphoribosyltransferase family. Short subfamily. In terms of assembly, heteromultimer composed of HisG and HisZ subunits.

The protein localises to the cytoplasm. The catalysed reaction is 1-(5-phospho-beta-D-ribosyl)-ATP + diphosphate = 5-phospho-alpha-D-ribose 1-diphosphate + ATP. Its pathway is amino-acid biosynthesis; L-histidine biosynthesis; L-histidine from 5-phospho-alpha-D-ribose 1-diphosphate: step 1/9. Functionally, catalyzes the condensation of ATP and 5-phosphoribose 1-diphosphate to form N'-(5'-phosphoribosyl)-ATP (PR-ATP). Has a crucial role in the pathway because the rate of histidine biosynthesis seems to be controlled primarily by regulation of HisG enzymatic activity. In Janthinobacterium sp. (strain Marseille) (Minibacterium massiliensis), this protein is ATP phosphoribosyltransferase.